The chain runs to 297 residues: Protein phosphatase PTC7 homolog (297 aa).

Residues Met1 to Tyr27 constitute a mitochondrion transit peptide. One can recognise a PPM-type phosphatase domain in the interval Ser28–Val292. Residues Asp71, Gly72, and Asp216 each coordinate Mn(2+).

This sequence belongs to the PP2C family. Requires Mg(2+) as cofactor. The cofactor is Mn(2+).

The protein resides in the mitochondrion matrix. It carries out the reaction O-phospho-L-seryl-[protein] + H2O = L-seryl-[protein] + phosphate. The enzyme catalyses O-phospho-L-threonyl-[protein] + H2O = L-threonyl-[protein] + phosphate. Protein phosphatase which positively regulates biosynthesis of the ubiquinone, coenzyme Q. Dephosphorylates the ubiquinone biosynthesis protein coq7 which is likely to lead to its activation. The protein is Protein phosphatase PTC7 homolog (pptc7) of Danio rerio (Zebrafish).